A 398-amino-acid polypeptide reads, in one-letter code: Streptopain (398 aa).

An N-terminal signal peptide occupies residues 1–27; sequence MNKKKLGIRLLSLLALGGFVLANPVFA. The propeptide occupies 28–145; it reads DQNFARNEKE…TTYAGTAEIK (118 aa). Cys192 acts as the Nucleophile in catalysis. Cys192 bears the Cysteine methyl disulfide; in zymogen form mark. Positions 282 and 339 each coordinate a protein. Residue His340 is the Proton acceptor of the active site. A C-terminal active site loop region spans residues 368–390; it reads RLDALNPSALGTGGGAGGFNGYQ.

The protein belongs to the peptidase C10 family. Monomer. The mature protease is derived from the precursor sequence by cleavage, either in cis via an autocatalytic mechanism, or in trans by mature SpeB or host proteases (trypsin, plasmin or subtilisin). Maturation can involve a number of protein cleavage intermediates. Mature SpeB probably plays the most important role in protein maturation in physiological conditions. In terms of processing, methylthiolation at Cys-192 of the inactive zymogen form is probably involved in the mechanism of secretion of the proteinase into the culture fluid.

Its subcellular location is the secreted. It is found in the host extracellular space. The protein resides in the host cytoplasm. It carries out the reaction Preferential cleavage with hydrophobic residues at P2, P1 and P1'.. With respect to regulation, synthesized as an inactive zymogen to protect the intracellular components of the bacteria from proteolytic activity during protein production. Once secreted into the extracellular milieu, cleaved into the active protease: maturation can be mediated in cis by autocatalytic cleavage, or in trans by mature SpeB or host proteases. Protease activity is strongly inhibited by zinc and copper, which prevent its maturation into an active protease: inhibition by metal ions may be required to prevent proteolysis of streptococcal proteins. In terms of biological role, cysteine protease that acts as a key streptococcal virulence factor by cleaving host proteins involved in immune response. Triggers inflammation by mediating cleavage of host proteins, which can both promote host pathogenesis by triggering sterile inflammation and/or restrict streptococcal infection, depending on host immune statue and infection site. Cleaves host gasdermin-A (GSDMA) in epithelial cells, promoting GSDMA activation and formation of gasdermin pores, triggering pyroptosis. Pyroptosis triggers the elimination of the infected skin cell, depriving the pathogen of its protective niche, while inducing an inflammatory response. This ultimately prevents bacterial penetration of the epithelial barrier and a subsequent systemic dissemination of the pathogen. Also mediates cleavage of the cytokine precursor interleukin-1 beta (IL1B) to its mature form, resulting in inflammation and septic shock. SpeB-mediated maturation of IL1B plays a dual role depending on infection site: while IL1B inflammatory response prevents bacterial growth during invasive skin infections, it promotes streptococcal infection of the nasopharynx by disrupting colonization resistance mediated by the microbiota. Inhibits host autophagy be catalyzing cleavage and inactivation of key autophagy factors, such as CALCOCO2, NBR1 and SQSTM1. Cleaves and inhibits a number of complement factors, such as C2, C3-beta chain of C3, C4, C5 or SERPING1, thereby promoting evasion of host immunity. May also impair adaptive immunity by catalyzing cleavage and degradation of host immunoglobulins to promote immune system evasion; the relevance of this activity is however unsure in vivo. Catalyzes maturation and release of the peptide hormone bradykinin from the precursor Kininogen-1 (KNG1) to produce hypotension during septic shock. Also involved in bacterial translocation across the host epithelial barrier by mediating cleavage and degradation of host epithelial junction proteins, such as CDH1 and OCLN. Additionally, has been involved in degradation of fibronectin and vitronectin, two host extracellular matrix proteins involved in tissue integrity. Also able to catalyze cleavage and degradation of streptococcal proteins, such as C5a peptidase, EndoS or SmeZ. Degradation of streptococcal proteins is however strictly regulated to preserve integrity of other virulence factors. The protein is Streptopain (speB) of Streptococcus pyogenes serotype M3 (strain ATCC BAA-595 / MGAS315).